Here is a 361-residue protein sequence, read N- to C-terminus: Uroporphyrinogen decarboxylase (361 aa).

Residues 27-31 (RQAGR), Asp-77, Tyr-154, Thr-209, and His-327 each bind substrate.

Belongs to the uroporphyrinogen decarboxylase family. As to quaternary structure, homodimer.

The protein resides in the cytoplasm. The catalysed reaction is uroporphyrinogen III + 4 H(+) = coproporphyrinogen III + 4 CO2. It participates in porphyrin-containing compound metabolism; protoporphyrin-IX biosynthesis; coproporphyrinogen-III from 5-aminolevulinate: step 4/4. Functionally, catalyzes the decarboxylation of four acetate groups of uroporphyrinogen-III to yield coproporphyrinogen-III. This chain is Uroporphyrinogen decarboxylase, found in Coxiella burnetii (strain Dugway 5J108-111).